The primary structure comprises 367 residues: Viral cathepsin (367 aa).

A signal peptide spans 1–25 (MRKYHSNIMHKIITFVSLLWTFVVC). Residues 26-156 (DEISLHTSSS…IVKGAPDIRL (131 aa)) constitute a propeptide, activation peptide. 2 N-linked (GlcNAc...) asparagine; by host glycosylation sites follow: Asn103 and Asn135. Cystine bridges form between Cys177-Cys218, Cys211-Cys251, and Cys306-Cys354. Cys180 is an active-site residue. Active-site residues include His313 and Asn333.

It belongs to the peptidase C1 family. In terms of processing, synthesized as an inactive proenzyme and activated by proteolytic removal of the inhibitory propeptide.

It carries out the reaction Endopeptidase of broad specificity, hydrolyzing substrates of both cathepsin L and cathepsin B.. Functionally, cysteine protease that plays an essential role in host liquefaction to facilitate horizontal transmission of the virus. May participate in the degradation of foreign protein expressed by the baculovirus system. The polypeptide is Viral cathepsin (VCATH) (Lepidoptera (butterflies and moths)).